Consider the following 174-residue polypeptide: 3-hydroxyanthranilate 3,4-dioxygenase (174 aa).

An O2-binding site is contributed by Arg47. Positions 51, 57, and 95 each coordinate Fe cation. A substrate-binding site is contributed by Glu57. Positions 99 and 110 each coordinate substrate. Fe cation is bound by residues Cys125, Cys128, Cys162, and Cys165.

The protein belongs to the 3-HAO family. In terms of assembly, homodimer. It depends on Fe(2+) as a cofactor.

The catalysed reaction is 3-hydroxyanthranilate + O2 = (2Z,4Z)-2-amino-3-carboxymuconate 6-semialdehyde. The protein operates within cofactor biosynthesis; NAD(+) biosynthesis; quinolinate from L-kynurenine: step 3/3. In terms of biological role, catalyzes the oxidative ring opening of 3-hydroxyanthranilate to 2-amino-3-carboxymuconate semialdehyde, which spontaneously cyclizes to quinolinate. The polypeptide is 3-hydroxyanthranilate 3,4-dioxygenase (Paraburkholderia phytofirmans (strain DSM 17436 / LMG 22146 / PsJN) (Burkholderia phytofirmans)).